A 601-amino-acid polypeptide reads, in one-letter code: Aspartate--tRNA(Asp/Asn) ligase (601 aa).

Glu-177 lines the L-aspartate pocket. Positions 201 to 204 (QLFK) are aspartate. Arg-223 lines the L-aspartate pocket. ATP contacts are provided by residues 223 to 225 (RDE) and Gln-232. Position 455 (His-455) interacts with L-aspartate. Residue Glu-489 participates in ATP binding. Position 496 (Arg-496) interacts with L-aspartate. 541 to 544 (GWDR) lines the ATP pocket. Residues 568–601 (VDPLTDAPAPIPLEQRRETGVDFKPKKKTDESAV) are disordered. Over residues 581–601 (EQRRETGVDFKPKKKTDESAV) the composition is skewed to basic and acidic residues.

It belongs to the class-II aminoacyl-tRNA synthetase family. Type 1 subfamily. Homodimer.

It is found in the cytoplasm. The enzyme catalyses tRNA(Asx) + L-aspartate + ATP = L-aspartyl-tRNA(Asx) + AMP + diphosphate. Aspartyl-tRNA synthetase with relaxed tRNA specificity since it is able to aspartylate not only its cognate tRNA(Asp) but also tRNA(Asn). Reaction proceeds in two steps: L-aspartate is first activated by ATP to form Asp-AMP and then transferred to the acceptor end of tRNA(Asp/Asn). The protein is Aspartate--tRNA(Asp/Asn) ligase of Corynebacterium diphtheriae (strain ATCC 700971 / NCTC 13129 / Biotype gravis).